Reading from the N-terminus, the 184-residue chain is UPF0669 protein C6orf120 homolog (184 aa).

An N-terminal signal peptide occupies residues 1–23 (MAAPWTGALLLLLASQAVSSAQA). N-linked (GlcNAc...) asparagine glycosylation is present at Asn47.

Belongs to the UPF0669 family.

It is found in the secreted. Its function is as follows. May be involved in induction of apoptosis in CD4(+) T-cells, but not CD8(+) T-cells or hepatocytes. The chain is UPF0669 protein C6orf120 homolog from Bos taurus (Bovine).